The primary structure comprises 361 residues: Cyclin-Y-like protein 2 (361 aa).

The region spanning 204–286 is the Cyclin N-terminal domain; it reads MRLTAEFAIV…QFLKLINYNN (83 aa).

The protein belongs to the cyclin family. Cyclin Y subfamily.

In Homo sapiens (Human), this protein is Cyclin-Y-like protein 2 (CCNYL2).